A 645-amino-acid chain; its full sequence is Putative bifunctional exonuclease/endonuclease protein MT2247 (645 aa).

The Exonuclease domain maps to 44–207 (VVVDLETTGG…DDARATVDVL (164 aa)). Residues 248-326 (HRPGVYLFRG…LSTHAPPYNR (79 aa)) enclose the GIY-YIG domain. The disordered stretch occupies residues 603 to 645 (WQSDLPTEPHPSREQLFGRTGVDCRTGPPQPLLPGRQPFSTAG). Low complexity predominate over residues 635 to 645 (LPGRQPFSTAG).

In Mycobacterium tuberculosis (strain CDC 1551 / Oshkosh), this protein is Putative bifunctional exonuclease/endonuclease protein MT2247.